The primary structure comprises 426 residues: Glutamyl-tRNA reductase (426 aa).

Substrate-binding positions include T49–R52, S109, E114–Q116, and Q120. The active-site Nucleophile is C50. An NADP(+)-binding site is contributed by G189–S194.

It belongs to the glutamyl-tRNA reductase family. Homodimer.

It carries out the reaction (S)-4-amino-5-oxopentanoate + tRNA(Glu) + NADP(+) = L-glutamyl-tRNA(Glu) + NADPH + H(+). It functions in the pathway porphyrin-containing compound metabolism; protoporphyrin-IX biosynthesis; 5-aminolevulinate from L-glutamyl-tRNA(Glu): step 1/2. Its pathway is porphyrin-containing compound metabolism; chlorophyll biosynthesis. Its function is as follows. Catalyzes the NADPH-dependent reduction of glutamyl-tRNA(Glu) to glutamate 1-semialdehyde (GSA). This chain is Glutamyl-tRNA reductase, found in Thermosynechococcus vestitus (strain NIES-2133 / IAM M-273 / BP-1).